A 125-amino-acid chain; its full sequence is Ixonnexin (125 aa).

Residues 1-21 (MGLTGTTLVLVCVAFFGSAAA) form the signal peptide. The N-linked (GlcNAc...) asparagine glycan is linked to asparagine 26. Positions 81-125 (TSSGGPDDTGDNTPPPTEKPKQKKKKPKKTKKPKRKSKKDQKENF) are disordered. Residues 101–119 (KQKKKKPKKTKKPKRKSKK) show a composition bias toward basic residues.

Belongs to the salp14 family. Homodimer. Interacts with host PLG. Interacts with host PLAT. In terms of tissue distribution, saliva (at protein level).

It is found in the secreted. Salivary protein that promotes host fibrinolysis via accelerating host plasmin generation from plasminogen (PLG) initiated by tPA/tissue-type plasminogen activator (PLAT). Does not affect urokinase (PLAU)-mediated fibrinolysis in the host. Enhances amidolytic activity of host coagulation factor Xa (F10). The sequence is that of Ixonnexin from Ixodes scapularis (Black-legged tick).